A 334-amino-acid chain; its full sequence is Glyceraldehyde-3-phosphate dehydrogenase (334 aa).

NAD(+) contacts are provided by residues 10–11 (RI), D33, K77, and T119. Residues 149 to 151 (SCT), T180, 209 to 210 (TG), and R232 contribute to the D-glyceraldehyde 3-phosphate site. The Nucleophile role is filled by C150. N314 is an NAD(+) binding site.

Belongs to the glyceraldehyde-3-phosphate dehydrogenase family. In terms of assembly, homotetramer.

The protein resides in the cytoplasm. It catalyses the reaction D-glyceraldehyde 3-phosphate + phosphate + NAD(+) = (2R)-3-phospho-glyceroyl phosphate + NADH + H(+). It participates in carbohydrate degradation; glycolysis; pyruvate from D-glyceraldehyde 3-phosphate: step 1/5. Functionally, catalyzes the oxidative phosphorylation of glyceraldehyde 3-phosphate (G3P) to 1,3-bisphosphoglycerate (BPG) using the cofactor NAD. The first reaction step involves the formation of a hemiacetal intermediate between G3P and a cysteine residue, and this hemiacetal intermediate is then oxidized to a thioester, with concomitant reduction of NAD to NADH. The reduced NADH is then exchanged with the second NAD, and the thioester is attacked by a nucleophilic inorganic phosphate to produce BPG. The protein is Glyceraldehyde-3-phosphate dehydrogenase (gap) of Chlamydia trachomatis serovar L2 (strain ATCC VR-902B / DSM 19102 / 434/Bu).